Reading from the N-terminus, the 498-residue chain is Glycerol kinase (498 aa).

Position 11 (Thr-11) interacts with ADP. 3 residues coordinate ATP: Thr-11, Ser-12, and Ser-13. Thr-11 contacts sn-glycerol 3-phosphate. Residue Arg-15 participates in ADP binding. Positions 81, 82, 133, and 242 each coordinate sn-glycerol 3-phosphate. Residues Arg-81, Glu-82, Tyr-133, Asp-242, and Gln-243 each contribute to the glycerol site. 2 residues coordinate ADP: Thr-264 and Gly-307. Thr-264, Gly-307, Gln-311, and Gly-412 together coordinate ATP. Residues Gly-412 and Asn-416 each coordinate ADP.

Belongs to the FGGY kinase family.

The enzyme catalyses glycerol + ATP = sn-glycerol 3-phosphate + ADP + H(+). It functions in the pathway polyol metabolism; glycerol degradation via glycerol kinase pathway; sn-glycerol 3-phosphate from glycerol: step 1/1. Its activity is regulated as follows. Inhibited by fructose 1,6-bisphosphate (FBP). Its function is as follows. Key enzyme in the regulation of glycerol uptake and metabolism. Catalyzes the phosphorylation of glycerol to yield sn-glycerol 3-phosphate. The sequence is that of Glycerol kinase from Delftia acidovorans (strain DSM 14801 / SPH-1).